We begin with the raw amino-acid sequence, 248 residues long: PACRG-like protein (248 aa).

An N-acetylmethionine modification is found at Met-1. A compositionally biased stretch (polar residues) spans 1–29 (MQKSEGSGGTQLKNRATGNYDQRTSSSTQ). Positions 1–71 (MQKSEGSGGT…LNPKTINPFG (71 aa)) are disordered. Residues 39–49 (SKSSLSTSSPE) are compositionally biased toward low complexity. Ser-47 bears the Phosphoserine mark.

This is PACRG-like protein (PACRGL) from Homo sapiens (Human).